Here is a 3848-residue protein sequence, read N- to C-terminus: Intermembrane lipid transfer protein tipC (3848 aa).

The region spanning 4–112 (HIAASVLTKY…KFQDEKQAKL (109 aa)) is the Chorein N-terminal domain. 12 disordered regions span residues 243–268 (IKKE…DEIE), 450–481 (LKLQ…TGGG), 966–985 (QQLQ…SPPL), 1174–1219 (KNNQ…NNNS), 1326–1345 (ERKL…GVST), 1907–1926 (ENIN…TTTT), 2024–2047 (DDYN…NQLP), 2209–2290 (IKPA…NKNL), 2330–2353 (FNPK…SPLL), 2509–2541 (KQLN…NLLG), 3209–3228 (GITN…NNND), and 3310–3342 (INQQ…NTTQ). Low complexity-rich tracts occupy residues 251 to 260 (QQQQQQQQQG) and 452 to 477 (LQQQ…PSTS). Positions 1175–1190 (NNQNNNQNNNQNNNQN) are enriched in low complexity. Residues 1191–1200 (INESSPTVFI) are compositionally biased toward polar residues. Positions 1202–1211 (SPPPPPPPPL) are enriched in pro residues. The segment covering 1333-1345 (TSPTTPSSSGVST) has biased composition (low complexity). 3 stretches are compositionally biased toward low complexity: residues 2029 to 2044 (DNYN…NSNN), 2217 to 2289 (NNNN…NNKN), and 2335 to 2353 (SSSS…SPLL). 2 stretches are compositionally biased toward low complexity: residues 3212–3228 (NDPN…NNND) and 3311–3342 (NQQP…NTTQ).

This sequence belongs to the VPS13 family.

It localises to the membrane. Mediates the transfer of lipids between membranes at organelle contact sites. The polypeptide is Intermembrane lipid transfer protein tipC (tipC) (Dictyostelium discoideum (Social amoeba)).